An 857-amino-acid chain; its full sequence is Catalase-peroxidase (857 aa).

Positions 207 to 330 (WHSAGTYRVS…LAAVQMGLIY (124 aa)) form a cross-link, tryptophyl-tyrosyl-methioninium (Trp-Tyr) (with M-356). Residue His208 is the Proton acceptor of the active site. The tryptophyl-tyrosyl-methioninium (Tyr-Met) (with W-207) cross-link spans 330-356 (YVNPEGPNGKPDPIAAAKDIRETFGRM). A heme b-binding site is contributed by His371.

It belongs to the peroxidase family. Peroxidase/catalase subfamily. In terms of assembly, homodimer or homotetramer. It depends on heme b as a cofactor. In terms of processing, formation of the three residue Trp-Tyr-Met cross-link is important for the catalase, but not the peroxidase activity of the enzyme.

It catalyses the reaction H2O2 + AH2 = A + 2 H2O. The enzyme catalyses 2 H2O2 = O2 + 2 H2O. Its function is as follows. Bifunctional enzyme with both catalase and broad-spectrum peroxidase activity. The protein is Catalase-peroxidase of Rhodopirellula baltica (strain DSM 10527 / NCIMB 13988 / SH1).